We begin with the raw amino-acid sequence, 339 residues long: Lipoate--protein ligase (339 aa).

One can recognise a BPL/LPL catalytic domain in the interval 31 to 221 (FLDDDILFPY…QLLQIETISQ (191 aa)). Residues arginine 73, 78–81 (GAVY), lysine 135, and alanine 139 contribute to the ATP site. Lysine 135 lines the (R)-lipoate pocket.

The protein belongs to the LplA family.

The catalysed reaction is L-lysyl-[lipoyl-carrier protein] + (R)-lipoate + ATP = N(6)-[(R)-lipoyl]-L-lysyl-[lipoyl-carrier protein] + AMP + diphosphate + H(+). Its pathway is protein modification; protein lipoylation via exogenous pathway; protein N(6)-(lipoyl)lysine from lipoate: step 1/2. It functions in the pathway protein modification; protein lipoylation via exogenous pathway; protein N(6)-(lipoyl)lysine from lipoate: step 2/2. Its function is as follows. Catalyzes specifically the lipoylation of GcvH-L (SpyM50867), likely via the ATP-dependent activation of lipoate to lipoyl-AMP and the transfer of the activated lipoyl onto the lipoyl domain of the target protein. This chain is Lipoate--protein ligase, found in Streptococcus pyogenes serotype M5 (strain Manfredo).